A 476-amino-acid polypeptide reads, in one-letter code: Bifunctional protein HldE (476 aa).

The tract at residues 1–318 (MKPVLPDYSK…AEAVHGSKDT (318 aa)) is ribokinase. An ATP-binding site is contributed by 195-198 (NMSE). Residue Asp-264 is part of the active site. The segment at 344 to 476 (MTNGCFDILH…IIEAIKGGRG (133 aa)) is cytidylyltransferase.

It in the N-terminal section; belongs to the carbohydrate kinase PfkB family. This sequence in the C-terminal section; belongs to the cytidylyltransferase family. In terms of assembly, homodimer.

The catalysed reaction is D-glycero-beta-D-manno-heptose 7-phosphate + ATP = D-glycero-beta-D-manno-heptose 1,7-bisphosphate + ADP + H(+). The enzyme catalyses D-glycero-beta-D-manno-heptose 1-phosphate + ATP + H(+) = ADP-D-glycero-beta-D-manno-heptose + diphosphate. The protein operates within nucleotide-sugar biosynthesis; ADP-L-glycero-beta-D-manno-heptose biosynthesis; ADP-L-glycero-beta-D-manno-heptose from D-glycero-beta-D-manno-heptose 7-phosphate: step 1/4. Its pathway is nucleotide-sugar biosynthesis; ADP-L-glycero-beta-D-manno-heptose biosynthesis; ADP-L-glycero-beta-D-manno-heptose from D-glycero-beta-D-manno-heptose 7-phosphate: step 3/4. In terms of biological role, catalyzes the phosphorylation of D-glycero-D-manno-heptose 7-phosphate at the C-1 position to selectively form D-glycero-beta-D-manno-heptose-1,7-bisphosphate. Functionally, catalyzes the ADP transfer from ATP to D-glycero-beta-D-manno-heptose 1-phosphate, yielding ADP-D-glycero-beta-D-manno-heptose. The chain is Bifunctional protein HldE from Vibrio cholerae serotype O1 (strain M66-2).